The following is a 466-amino-acid chain: ATP synthase subunit beta (466 aa).

155–162 (GGAGVGKT) is a binding site for ATP.

It belongs to the ATPase alpha/beta chains family. F-type ATPases have 2 components, CF(1) - the catalytic core - and CF(0) - the membrane proton channel. CF(1) has five subunits: alpha(3), beta(3), gamma(1), delta(1), epsilon(1). CF(0) has three main subunits: a(1), b(2) and c(9-12). The alpha and beta chains form an alternating ring which encloses part of the gamma chain. CF(1) is attached to CF(0) by a central stalk formed by the gamma and epsilon chains, while a peripheral stalk is formed by the delta and b chains.

The protein localises to the cell inner membrane. It carries out the reaction ATP + H2O + 4 H(+)(in) = ADP + phosphate + 5 H(+)(out). Functionally, produces ATP from ADP in the presence of a proton gradient across the membrane. The catalytic sites are hosted primarily by the beta subunits. The sequence is that of ATP synthase subunit beta from Bordetella bronchiseptica (strain ATCC BAA-588 / NCTC 13252 / RB50) (Alcaligenes bronchisepticus).